The following is a 139-amino-acid chain: Transcription antitermination protein NusB (139 aa).

This sequence belongs to the NusB family.

Functionally, involved in transcription antitermination. Required for transcription of ribosomal RNA (rRNA) genes. Binds specifically to the boxA antiterminator sequence of the ribosomal RNA (rrn) operons. The polypeptide is Transcription antitermination protein NusB (Nitratiruptor sp. (strain SB155-2)).